A 705-amino-acid chain; its full sequence is Dolichyl-diphosphooligosaccharide--protein glycosyltransferase subunit STT3A (705 aa).

At 1-17 (MTKLGFLRLSYEKQDTL) the chain is on the cytoplasmic side. A helical transmembrane segment spans residues 18-38 (LKLLILSMAAVLSFSTRLFAV). Over 39–119 (LRFESVIHEF…IDIRNVCVFL (81 aa)) the chain is Lumenal. The DXD motif 1 signature appears at 47–49 (EFD). Mn(2+) is bound at residue D49. The helical transmembrane segment at 120–138 (APLFSSFTTIVTYHLTKEL) threads the bilayer. At 139–140 (KD) the chain is on the cytoplasmic side. A helical membrane pass occupies residues 141-158 (AGAGLLAAAMIAVVPGYI). At 159 to 169 (SRSVAGSYDNE) the chain is on the lumenal side. Mn(2+)-binding residues include D167 and E169. The short motif at 167–169 (DNE) is the DXD motif 2 element. The chain crosses the membrane as a helical span at residues 170–189 (GIAIFCMLLTYYMWIKAVKT). Residues 190 to 191 (GS) lie on the Cytoplasmic side of the membrane. The chain crosses the membrane as a helical span at residues 192-206 (IYWAAKCALAYFYMV). Residues 207 to 211 (SSWGG) lie on the Lumenal side of the membrane. A helical transmembrane segment spans residues 212–228 (YVFLINLIPLHVLVLML). Residues 229–233 (TGRFS) lie on the Cytoplasmic side of the membrane. Residues 234–259 (HRIYVAYCTVYCLGTILSMQISFVGF) traverse the membrane as a helical segment. Residues 260–267 (QPVLSSEH) lie on the Lumenal side of the membrane. The helical transmembrane segment at 268-287 (MAAFGVFGLCQIHAFVDYLR) threads the bilayer. At 288-300 (SKLNPQQFEVLFR) the chain is on the cytoplasmic side. The helical transmembrane segment at 301–321 (SVISLVGFVLLTVGALLMLTG) threads the bilayer. Residues 322–356 (KISPWTGRFYSLLDPSYAKNNIPIIASVSEHQPTT) are Lumenal-facing. An SVSE motif motif is present at residues 348–351 (SVSE). The helical transmembrane segment at 357-379 (WSSYYFDLQLLVFMFPVGLYYCF) threads the bilayer. The Cytoplasmic portion of the chain corresponds to 380–385 (SNLSDA). The helical transmembrane segment at 386-402 (RIFIIMYGVTSMYFSAV) threads the bilayer. Over 403 to 406 (MVRL) the chain is Lumenal. Dolichyl diphosphooligosaccharide is bound at residue R405. A helical transmembrane segment spans residues 407-428 (MLVLAPVMCILSGIGVSQVLST). Topologically, residues 429-453 (YMKNLDISRPDKKSKKQQDSTYPIK) are cytoplasmic. Residues 454–473 (NEVASGMILVMAFFLITYTF) form a helical membrane-spanning segment. The Lumenal segment spans residues 474-705 (HSTWVTSEAY…DLDNRGLSRT (232 aa)). An interacts with target acceptor peptide in protein substrate region spans residues 525–527 (WWD). A WWDYG motif motif is present at residues 525-529 (WWDYG). Y530 is a binding site for dolichyl diphosphooligosaccharide. Residues N537 and N544 are each glycosylated (N-linked (GlcNAc...) asparagine). N548 carries N-linked (GlcNAc...) (high mannose) asparagine glycosylation. The short motif at 592 to 599 (DINKFLWM) is the DK motif element.

It belongs to the STT3 family. In terms of assembly, component of the oligosaccharyltransferase (OST) complex. There are 2 OST complexes, OST-A and OST-B, which contain STT3A or STT3B as catalytic subunit, respectively. OST-A and OST-B contain common core subunits RPN1, RPN2, OST48, OST4, DAD1 and TMEM258, and OST-A contains DC2/OSTC and KRTCAP2/KCP2 specific accessory subunits. OST-A complex assembly occurs through the formation of 3 subcomplexes. Subcomplex 1 contains RPN1 and TMEM258, subcomplex 2 contains the OST-A-specific subunits STT3A, DC2/OSTC, and KCP2 as well as the core subunit OST4, and subcomplex 3 contains RPN2, DAD1, and OST48. The OST-A complex can form stable complexes with the Sec61 complex or with both the Sec61 and TRAP complexes. It depends on Mg(2+) as a cofactor. Mn(2+) is required as a cofactor.

It localises to the endoplasmic reticulum. Its subcellular location is the endoplasmic reticulum membrane. It catalyses the reaction a di-trans,poly-cis-dolichyl diphosphooligosaccharide + L-asparaginyl-[protein] = N(4)-(oligosaccharide-(1-&gt;4)-N-acetyl-beta-D-glucosaminyl-(1-&gt;4)-N-acetyl-beta-D-glucosaminyl)-L-asparaginyl-[protein] + a di-trans,poly-cis-dolichyl diphosphate + H(+). The protein operates within protein modification; protein glycosylation. Its function is as follows. Catalytic subunit of the oligosaccharyl transferase (OST) complex that catalyzes the initial transfer of a defined glycan (Glc(3)Man(9)GlcNAc(2) in eukaryotes) from the lipid carrier dolichol-pyrophosphate to an asparagine residue within an Asn-X-Ser/Thr consensus motif in nascent polypeptide chains, the first step in protein N-glycosylation. N-glycosylation occurs cotranslationally and the complex associates with the Sec61 complex at the channel-forming translocon complex that mediates protein translocation across the endoplasmic reticulum (ER). All subunits are required for a maximal enzyme activity. This subunit contains the active site and the acceptor peptide and donor lipid-linked oligosaccharide (LLO) binding pockets. STT3A is present in the majority of OST complexes and mediates cotranslational N-glycosylation of most sites on target proteins, while STT3B-containing complexes are required for efficient post-translational glycosylation and mediate glycosylation of sites that have been skipped by STT3A. STT3A-containing OST-A complex is also required to prevent hyperglycosylation of some target proteins by preventing glycosylation of facultative sites before folding of target proteins is completed. This Mus musculus (Mouse) protein is Dolichyl-diphosphooligosaccharide--protein glycosyltransferase subunit STT3A.